Reading from the N-terminus, the 555-residue chain is Glucose-6-phosphate isomerase (555 aa).

Glu356 functions as the Proton donor in the catalytic mechanism. Catalysis depends on residues His387 and Lys515.

It belongs to the GPI family.

The protein localises to the cytoplasm. It carries out the reaction alpha-D-glucose 6-phosphate = beta-D-fructose 6-phosphate. It functions in the pathway carbohydrate biosynthesis; gluconeogenesis. Its pathway is carbohydrate degradation; glycolysis; D-glyceraldehyde 3-phosphate and glycerone phosphate from D-glucose: step 2/4. Catalyzes the reversible isomerization of glucose-6-phosphate to fructose-6-phosphate. This is Glucose-6-phosphate isomerase from Desulforapulum autotrophicum (strain ATCC 43914 / DSM 3382 / VKM B-1955 / HRM2) (Desulfobacterium autotrophicum).